Here is a 37-residue protein sequence, read N- to C-terminus: MSDIN-like toxin proprotein 5 (37 aa).

Positions 1-10 (MSDINATRLP) are excised as a propeptide. Positions 11-20 (LFFPPDFRPP) form a cross-link, cyclopeptide (Leu-Pro). The propeptide occupies 21 to 37 (CVGDADNFTLTRGENLC).

It belongs to the MSDIN fungal toxin family. Post-translationally, processed by the macrocyclase-peptidase enzyme POPB to yield a toxic cyclic decapeptide. POPB first removes 10 residues from the N-terminus. Conformational trapping of the remaining peptide forces the enzyme to release this intermediate rather than proceed to macrocyclization. The enzyme rebinds the remaining peptide in a different conformation and catalyzes macrocyclization of the N-terminal 10 residues. In terms of tissue distribution, expressed in basidiocarps.

Functionally, probable toxin that belongs to the MSDIN-like toxin family responsible for a large number of food poisoning cases and deaths. This Amanita exitialis (Guangzhou destroying angel) protein is MSDIN-like toxin proprotein 5.